A 98-amino-acid polypeptide reads, in one-letter code: Acylphosphatase (98 aa).

Positions 12–98 (TYYVRVRGVV…ERRFDRFQQQ (87 aa)) constitute an Acylphosphatase-like domain. Residues arginine 27 and asparagine 45 contribute to the active site.

The protein belongs to the acylphosphatase family.

The enzyme catalyses an acyl phosphate + H2O = a carboxylate + phosphate + H(+). The polypeptide is Acylphosphatase (acyP) (Burkholderia ambifaria (strain ATCC BAA-244 / DSM 16087 / CCUG 44356 / LMG 19182 / AMMD) (Burkholderia cepacia (strain AMMD))).